The following is a 269-amino-acid chain: JmjC domain-containing protein 8 (269 aa).

A signal peptide spans 1–24; it reads MAAAGRFGLLLLIVLWTMVTVVLP. 3 N-linked (GlcNAc...) asparagine glycosylation sites follow: Asn-135, Asn-145, and Asn-214. The 123-residue stretch at 147-269 folds into the JmjC domain; sequence TEWAPLFQHY…TSVFISTFLG (123 aa).

As to quaternary structure, oligomer. Dimer. Interacts with PKM; regulates angiogenesis and metabolism. In terms of processing, N-glycosylated.

The protein resides in the endoplasmic reticulum lumen. It localises to the cytoplasm. Functionally, functions as a positive regulator of TNF-induced NF-kappaB signaling. Regulates angiogenesis and cellular metabolism through interaction with PKM. The sequence is that of JmjC domain-containing protein 8 from Rattus norvegicus (Rat).